Consider the following 791-residue polypeptide: Phosphoenolpyruvate synthase (791 aa).

Thr416 is modified (phosphothreonine). Catalysis depends on His418, which acts as the Tele-phosphohistidine intermediate. Positions 508, 575, 677, 698, 699, 700, and 701 each coordinate substrate. A Mg(2+)-binding site is contributed by Glu677. Asp701 serves as a coordination point for Mg(2+). Phosphotyrosine is present on Tyr744. Cys748 serves as the catalytic Proton donor.

The protein belongs to the PEP-utilizing enzyme family. Requires Mg(2+) as cofactor.

The enzyme catalyses pyruvate + ATP + H2O = phosphoenolpyruvate + AMP + phosphate + 2 H(+). It functions in the pathway carbohydrate biosynthesis; gluconeogenesis. In terms of biological role, catalyzes the phosphorylation of pyruvate to phosphoenolpyruvate. The protein is Phosphoenolpyruvate synthase (ppsA) of Pseudomonas aeruginosa (strain UCBPP-PA14).